The sequence spans 56 residues: Small ribosomal subunit protein bS21 (56 aa).

Belongs to the bacterial ribosomal protein bS21 family.

The chain is Small ribosomal subunit protein bS21 from Synechococcus sp. (strain RCC307).